The sequence spans 434 residues: Citrate-proton symporter (434 aa).

Topologically, residues 1–21 are cytoplasmic; it reads MAQHTPATSRAGTFGAILRVT. Residues 22–42 form a helical membrane-spanning segment; that stretch reads SGNFLEQFDFFLFGFYATYIA. Topologically, residues 43–54 are periplasmic; that stretch reads RTFFPAESEFAS. Residues 55–75 traverse the membrane as a helical segment; sequence LMLTFAVFGSGFLMRPVGAIV. Topologically, residues 76-87 are cytoplasmic; that stretch reads LGAYIDRIGRRK. A helical membrane pass occupies residues 88–108; sequence GLMVTLAIMGCGTLLIALVPG. The Periplasmic segment spans residues 109-111; that stretch reads YQT. The helical transmembrane segment at 112 to 132 threads the bilayer; the sequence is IGLAAPALVLLGRLLQGFSAG. At 133-164 the chain is on the cytoplasmic side; that stretch reads VELGGVSVYLSEIATPGNKGFYTSWQSASQQV. Residues 165 to 185 form a helical membrane-spanning segment; it reads AIVVAALIGYSLNITLGHDAI. A topological domain (periplasmic) is located at residue Ser186. Residues 187 to 207 traverse the membrane as a helical segment; that stretch reads EWGWRIPFFIGCMIIPLIFVL. Over 208-238 the chain is Cytoplasmic; it reads RRSLQETEAFLQRKHRPDTREIFATIAKNWR. The helical transmembrane segment at 239–259 threads the bilayer; the sequence is IITAGTLLVAMTTTTFYFITV. Topologically, residues 260–276 are periplasmic; the sequence is YTPTYGRTVLNLSARDS. A helical transmembrane segment spans residues 277–297; it reads LIVTMLVGVSNFIWLPIGGAI. Topologically, residues 298–304 are cytoplasmic; that stretch reads SDRIGRR. The chain crosses the membrane as a helical span at residues 305 to 325; it reads AVLMGITLLALITTWPVMQWL. The Periplasmic segment spans residues 326-335; the sequence is TAAPDFTRMT. The chain crosses the membrane as a helical span at residues 336–356; that stretch reads LVLLWFSFFFGMYNGAMVAAL. Topologically, residues 357–366 are cytoplasmic; that stretch reads TEVMPVYVRT. The chain crosses the membrane as a helical span at residues 367 to 387; sequence VGFSLAFSLATAIFGGLTPAI. Residues 388 to 400 are Periplasmic-facing; sequence STALVKLTGDKSS. Residues 401–421 traverse the membrane as a helical segment; that stretch reads PGWWLMCAALCGLAATAMLFV. The Cytoplasmic portion of the chain corresponds to 422-434; the sequence is RLSRGYIAAENKA.

The protein belongs to the major facilitator superfamily. Metabolite:H+ Symporter (MHS) family (TC 2.A.1.6) family.

The protein localises to the cell inner membrane. Its function is as follows. Uptake of citrate across the boundary membrane with the concomitant transport of protons into the cell (symport system). This is Citrate-proton symporter (citA) from Salmonella typhi.